Here is a 150-residue protein sequence, read N- to C-terminus: Catabolic 3-dehydroquinase 2 (150 aa).

Tyr23 (proton acceptor) is an active-site residue. Residues Asn74, His80, and Asp87 each contribute to the substrate site. His100 serves as the catalytic Proton donor. Substrate contacts are provided by residues 101-102 and Arg111; that span reads IT.

Belongs to the type-II 3-dehydroquinase family. Homododecamer. Adopts a ring-like structure, composed of an arrangement of two hexameric rings stacked on top of one another.

It catalyses the reaction 3-dehydroquinate = 3-dehydroshikimate + H2O. It participates in aromatic compound metabolism; 3,4-dihydroxybenzoate biosynthesis; 3,4-dihydroxybenzoate from 3-dehydroquinate: step 1/2. Its function is as follows. Is involved in the catabolism of quinate. Allows the utilization of quinate as carbon source via the beta-ketoadipate pathway. This is Catabolic 3-dehydroquinase 2 from Neosartorya fischeri (strain ATCC 1020 / DSM 3700 / CBS 544.65 / FGSC A1164 / JCM 1740 / NRRL 181 / WB 181) (Aspergillus fischerianus).